We begin with the raw amino-acid sequence, 278 residues long: Extracellular metalloprotease MCYG_03238 (278 aa).

The N-terminal stretch at 1–19 is a signal peptide; that stretch reads MRFSIVLSSIAALSSVAAA. Asparagine 52 is a glycosylation site (N-linked (GlcNAc...) asparagine). A Zn(2+)-binding site is contributed by histidine 170. Residue glutamate 171 is part of the active site. Histidine 174 contributes to the Zn(2+) binding site. A disulfide bridge connects residues cysteine 209 and cysteine 255.

Belongs to the peptidase M43B family.

The protein resides in the secreted. Its function is as follows. Secreted metalloproteinase that allows assimilation of proteinaceous substrates. Plays a pivotal role as a pathogenicity determinant during infections and contributes to the ability of the pathogen to persist within the mammalian host. This Arthroderma otae (strain ATCC MYA-4605 / CBS 113480) (Microsporum canis) protein is Extracellular metalloprotease MCYG_03238.